The primary structure comprises 699 residues: Ciliated left-right organizer metallopeptidase (699 aa).

An N-terminal signal peptide occupies residues 1-18 (MKMWRLLLLGVATGRCLH). Residues 19 to 663 (EETQKSVRLL…SLDHNPSMTE (645 aa)) are Extracellular-facing. Residue histidine 238 participates in Zn(2+) binding. Residue glutamate 239 is part of the active site. The Zn(2+) site is built by histidine 242 and histidine 318. The helical transmembrane segment at 664–684 (LLLSTGFCLLVLILVGALGTL) threads the bilayer. Over 685-699 (AYQKRAMLQVAPSTT) the chain is Cytoplasmic.

Belongs to the peptidase M8 family. The cofactor is Zn(2+). In terms of tissue distribution, specifically expressed in ciliated left-right organizer.

The protein resides in the membrane. Functionally, putative metalloproteinase that plays a role in left-right patterning process. The sequence is that of Ciliated left-right organizer metallopeptidase from Mus musculus (Mouse).